Here is a 768-residue protein sequence, read N- to C-terminus: DNA ligase (768 aa).

NAD(+) is bound by residues 61–65 (DAEFD), 110–111 (SL), and E146. K148 functions as the N6-AMP-lysine intermediate in the catalytic mechanism. Positions 169, 206, 322, and 346 each coordinate NAD(+). Zn(2+)-binding residues include C443, C446, C462, and C468. The 90-residue stretch at 661-750 (SVPRTLEGLT…PAQTGTEAEA (90 aa)) folds into the BRCT domain. The disordered stretch occupies residues 739–768 (NGPAQTGTEAEAATDEATVVDETAAEAATE). Residues 746–768 (TEAEAATDEATVVDETAAEAATE) show a composition bias toward low complexity.

It belongs to the NAD-dependent DNA ligase family. LigA subfamily. Mg(2+) serves as cofactor. Mn(2+) is required as a cofactor.

The catalysed reaction is NAD(+) + (deoxyribonucleotide)n-3'-hydroxyl + 5'-phospho-(deoxyribonucleotide)m = (deoxyribonucleotide)n+m + AMP + beta-nicotinamide D-nucleotide.. In terms of biological role, DNA ligase that catalyzes the formation of phosphodiester linkages between 5'-phosphoryl and 3'-hydroxyl groups in double-stranded DNA using NAD as a coenzyme and as the energy source for the reaction. It is essential for DNA replication and repair of damaged DNA. The chain is DNA ligase from Paenarthrobacter aurescens (strain TC1).